We begin with the raw amino-acid sequence, 177 residues long: Protein GrpE (177 aa).

It belongs to the GrpE family. As to quaternary structure, homodimer. K(+) is required as a cofactor.

Its subcellular location is the cytoplasm. Functionally, participates actively in the response to hyperosmotic and heat shock by preventing the aggregation of stress-denatured proteins, in association with DnaK and GrpE. It is the nucleotide exchange factor for DnaK and may function as a thermosensor. Unfolded proteins bind initially to DnaJ; upon interaction with the DnaJ-bound protein, DnaK hydrolyzes its bound ATP, resulting in the formation of a stable complex. GrpE releases ADP from DnaK; ATP binding to DnaK triggers the release of the substrate protein, thus completing the reaction cycle. Several rounds of ATP-dependent interactions between DnaJ, DnaK and GrpE are required for fully efficient folding. The protein is Protein GrpE of Thermus thermophilus (strain ATCC 27634 / DSM 579 / HB8).